A 106-amino-acid chain; its full sequence is Iron-sulfur cluster assembly protein CyaY (106 aa).

It belongs to the frataxin family.

In terms of biological role, involved in iron-sulfur (Fe-S) cluster assembly. May act as a regulator of Fe-S biogenesis. This Yersinia pestis bv. Antiqua (strain Antiqua) protein is Iron-sulfur cluster assembly protein CyaY.